Consider the following 392-residue polypeptide: V-type proton ATPase subunit C (392 aa).

Residue A2 is modified to N-acetylalanine.

It belongs to the V-ATPase C subunit family. In terms of assembly, V-ATPase is a heteromultimeric enzyme composed of a peripheral catalytic V1 complex (components A to H) attached to an integral membrane V0 proton pore complex (components: a, c, c', c'', d, e, f and VOA1). Interacts directly with VMA4.

It localises to the vacuole membrane. Subunit of the V1 complex of vacuolar(H+)-ATPase (V-ATPase), a multisubunit enzyme composed of a peripheral complex (V1) that hydrolyzes ATP and a membrane integral complex (V0) that translocates protons. V-ATPase is responsible for acidifying and maintaining the pH of intracellular compartments. Subunit C is necessary for the assembly of the catalytic sector of the enzyme and is likely to have a specific function in its catalytic activity. Reversibly leaves the enzyme after glucose depletion, causing the catalytic subcomplex V1 to detach from the V0 section. The polypeptide is V-type proton ATPase subunit C (Saccharomyces cerevisiae (strain ATCC 204508 / S288c) (Baker's yeast)).